We begin with the raw amino-acid sequence, 966 residues long: MIINTIDKIYNPKNIEESIYNFWEKSNYFEPDIINNYKKNYCIMMPPPNITGGLHLGHAFQQTIMDILVRYQRMNGKNVLWASGLDHAGIATQILIEKNFYNKKNSIKDNHDPHSLIKEVWLWKEKSEKFINYQIKRLGHSVSWKNKHFTMDPEISLAVKEAFIQLYTNNLIYKGKQLVNWDSKLQTAISDLEVSHKQKSDFIWYIQYQLEYNTSHINNQKKNADYLTIATTRPETILGDVAIAVNPEDPRYSHLIGKYVFTPITNRRIPIISDKFVNINKGTGCVKITPAHDFNDYIIGKKYKLPMINIFSTYKTILTIPEISNNQGQPYIQSNDQYHIPKMFHNLDYKDARKKIIEECKRLKILEDIKTHQLTVPINNRTGTIIEPMLTDQWFIKTKFLAKQAINAVTNEKIKFIPKNYTNIYLQWMNEIQDWCISRQIWWGHRIPVWYDNNNTIYVGHCEKDIRIKNQLNKDIQLSQDNNVLDTWFSSSLWTFSSLGWPKNNTLLKMFHPTNIIISGFDIIFFWIARMIMMTMYLVKDQNNNAQIPFKKIYITGLMRDKFGQKMSKSKGNGIDPIDIIDGISKKKLLKKQLKENSQSKSISSIIKYINTQFPNGIKPYGADTLRLTLTALASSGQDIHWDMHKLESYHNFCNKLWNVSKFVITHTDNYHYDIDTKNKKIFSLSDRWITSKLHQTIQKFSQALNDYRFDHTVNILYEFIWHQFCDWYIEFTKPILYHSTNTLQLISTRYTLITSLESILRLSHPIIPFITEKIWQKIHSIVTTNNKHTIMLQSFPKYDSNYIDLESISDIEWIQNLIAEIRMIRTYTGISYKIPLDIGFYNTSNHIKECISENYHILTKILQLQTINFLEKNDISNNRYFKIPIKESELIIFIPNIFDKKTAIHKFNKEIKLINYKIHLLEQKMNNTNYSLNLQHSFKKSQEKLNHYNKTKNKLLNQYFIVKNL.

Residues Pro48 to His58 carry the 'HIGH' region motif. Residues Asp348 to Asp368 are a coiled coil. The short motif at Lys566–Ser570 is the 'KMSKS' region element. ATP is bound at residue Lys569. The stretch at Phe939–Tyr960 forms a coiled coil.

It belongs to the class-I aminoacyl-tRNA synthetase family. ValS type 1 subfamily. In terms of assembly, monomer.

The protein resides in the cytoplasm. The catalysed reaction is tRNA(Val) + L-valine + ATP = L-valyl-tRNA(Val) + AMP + diphosphate. Its function is as follows. Catalyzes the attachment of valine to tRNA(Val). As ValRS can inadvertently accommodate and process structurally similar amino acids such as threonine, to avoid such errors, it has a 'posttransfer' editing activity that hydrolyzes mischarged Thr-tRNA(Val) in a tRNA-dependent manner. The protein is Valine--tRNA ligase of Blochmanniella floridana.